Here is an 82-residue protein sequence, read N- to C-terminus: Cytochrome b559 subunit alpha (82 aa).

The chain crosses the membrane as a helical span at residues 22–36; it reads VIHSITIPALFIAGW. Histidine 24 lines the heme pocket.

Belongs to the PsbE/PsbF family. Heterodimer of an alpha subunit and a beta subunit. PSII is composed of 1 copy each of membrane proteins PsbA, PsbB, PsbC, PsbD, PsbE, PsbF, PsbH, PsbI, PsbJ, PsbK, PsbL, PsbM, PsbT, PsbX, PsbY, PsbZ, Psb30/Ycf12, peripheral proteins PsbO, CyanoQ (PsbQ), PsbU, PsbV and a large number of cofactors. It forms dimeric complexes. It depends on heme b as a cofactor.

The protein resides in the cellular thylakoid membrane. Functionally, this b-type cytochrome is tightly associated with the reaction center of photosystem II (PSII). PSII is a light-driven water:plastoquinone oxidoreductase that uses light energy to abstract electrons from H(2)O, generating O(2) and a proton gradient subsequently used for ATP formation. It consists of a core antenna complex that captures photons, and an electron transfer chain that converts photonic excitation into a charge separation. This Trichodesmium erythraeum (strain IMS101) protein is Cytochrome b559 subunit alpha.